The sequence spans 354 residues: Phospho-N-acetylmuramoyl-pentapeptide-transferase (354 aa).

Helical transmembrane passes span Ile-23–Ala-43, Thr-66–Ser-86, Leu-88–Phe-108, Phe-138–Phe-158, Tyr-161–Ser-181, Gly-193–Cys-213, Val-227–Phe-247, Val-257–Val-277, Ile-282–Val-302, and Lys-331–Leu-351.

It belongs to the glycosyltransferase 4 family. MraY subfamily. The cofactor is Mg(2+).

It localises to the cell inner membrane. The enzyme catalyses UDP-N-acetyl-alpha-D-muramoyl-L-alanyl-gamma-D-glutamyl-meso-2,6-diaminopimeloyl-D-alanyl-D-alanine + di-trans,octa-cis-undecaprenyl phosphate = di-trans,octa-cis-undecaprenyl diphospho-N-acetyl-alpha-D-muramoyl-L-alanyl-D-glutamyl-meso-2,6-diaminopimeloyl-D-alanyl-D-alanine + UMP. It participates in cell wall biogenesis; peptidoglycan biosynthesis. Functionally, catalyzes the initial step of the lipid cycle reactions in the biosynthesis of the cell wall peptidoglycan: transfers peptidoglycan precursor phospho-MurNAc-pentapeptide from UDP-MurNAc-pentapeptide onto the lipid carrier undecaprenyl phosphate, yielding undecaprenyl-pyrophosphoryl-MurNAc-pentapeptide, known as lipid I. This is Phospho-N-acetylmuramoyl-pentapeptide-transferase from Campylobacter hominis (strain ATCC BAA-381 / DSM 21671 / CCUG 45161 / LMG 19568 / NCTC 13146 / CH001A).